Reading from the N-terminus, the 478-residue chain is MRFLDGHTPAYDLTYNDVFVVPGRSDVASRFDVDLSTVDGSGTTIPVVVANMTAVAGRRMAETVARRGGIVVLPQDLPITAVSETVDFVKSRDLVVDTPVTLSPEDSVSDANALLHKRAHGAAVVVFEGRPIGLVTEANCAGVDRFARVRDIALSDFVTAPVGTDPREVFDLLEHAPIDVAVMTAPDGTLAGVLTRTGAIRAGIYTPAVDAKGRLRIAAAVGINGDVGAKAQALAEAGADLLVIDTAHGHQAKMLDAIKAVASLDLGLPLVAGNVVSAEGTRDLIEAGASIVKVGVGPGAMCTTRMMTGVGRPQFSAVVECAAAARQLGGHVWADGGVRHPRDVALALAAGASNVMIGSWFAGTYESPGDLLFDRDDRPYKESYGMASKRAVAARTAGDSSFDRARKGLFEEGISTSRMSLDPARGGVEDLLDHITSGVRSTCTYVGAANLPELHEKVVLGVQSAAGFAEGHPLPAGW.

2 consecutive CBS domains span residues 95–152 (VVDT…VRDI) and 153–211 (ALSD…AVDA). NADP(+) is bound by residues 245 to 247 (DTA) and 295 to 297 (GVG). The active-site Thioimidate intermediate is Cys-302.

Belongs to the IMPDH/GMPR family. GuaB1 subfamily. Homooctamer composed of two tetramers. The oligomerization state is regulated by ligands and pH. A monovalent cation serves as cofactor.

It carries out the reaction IMP + NH4(+) + NADP(+) = GMP + NADPH + 2 H(+). It participates in purine metabolism; IMP biosynthesis via salvage pathway. Activity is allosterically regulated by the ATP/GTP ratio in a pH-dependent manner. At pH 7.8, GTP has only a minor positive effect and ATP only a minor negative effect on the activity, however, at lower pH values, the effects of ATP and GTP increase. ATP-dependent inhibition can be restored by increasing GTP concentration. IMP and XMP are competitive inhibitors. Functionally, involved in the purine-salvage pathway. Catalyzes the NADPH-dependent conversion of GMP to IMP. Is not essential for viability, but may contribute to the regulation of the purine nucleotide pool by recycling GMP to IMP. The protein is GMP reductase of Mycolicibacterium smegmatis (strain ATCC 700084 / mc(2)155) (Mycobacterium smegmatis).